The sequence spans 658 residues: Serine/threonine-protein kinase shk1/pak1 (658 aa).

4 disordered regions span residues 1-21 (MERG…ITPI), 39-104 (RKLK…SYDE), 126-147 (GGSS…STVI), and 213-365 (GAKP…QQSN). Residues 66 to 98 (PLSQSRTTVSRVSLGSRQHSSSSIRKLQTNVSD) show a composition bias toward polar residues. Positions 129-140 (SPTSSYGSGSAS) are enriched in low complexity. A CRIB domain is found at 147 to 160 (ISSPFDPKHVTHVG). Low complexity-rich tracts occupy residues 226–254 (PLLS…LYPS) and 262–272 (ASSSSSPLLSS). Residues 273–300 (QTVKTTTSNASRQPSPLVSSKSTDNIIR) show a composition bias toward polar residues. Phosphoserine occurs at positions 301 and 303. Positions 386 to 637 (YRNFVKIGQG…SGELLRHPFL (252 aa)) constitute a Protein kinase domain. ATP-binding positions include 392-400 (IGQGASGDV) and Lys-415. The Proton acceptor role is filled by Asp-505.

It belongs to the protein kinase superfamily. STE Ser/Thr protein kinase family. STE20 subfamily. In terms of assembly, forms an activated complex with GTP-bound ras-like cdc42. Interacts with skb1 and the SH3 domain of skb5 via its amino-terminal regulatory domain. Skb1, cdc42 and shk1 are able to form a ternary complex in vivo. Interacts with rga8 and may interact with byr2. In terms of processing, autophosphorylated on serine residues.

The protein localises to the cytoplasm. It localises to the cytoskeleton. The protein resides in the spindle. The catalysed reaction is L-seryl-[protein] + ATP = O-phospho-L-seryl-[protein] + ADP + H(+). It catalyses the reaction L-threonyl-[protein] + ATP = O-phospho-L-threonyl-[protein] + ADP + H(+). In terms of biological role, MAP4K component of the MAPK pathway required for the mating pheromone response. Phosphorylates histone H2B to form H2BS10ph. Phosphorylates tea1. Required for skb1-dependent mitotic inhibitory function. Regulates microtubule dynamics and cell polarity. The sequence is that of Serine/threonine-protein kinase shk1/pak1 (shk1) from Schizosaccharomyces pombe (strain 972 / ATCC 24843) (Fission yeast).